A 75-amino-acid polypeptide reads, in one-letter code: YTLLCYKTPSPINAETCPPGENLCYTKMWCDAWCSSRGKVIELGCAATCPSKKPYEEVTCCSTDKCNPHPKQRPG.

Residues 1–2 (YT) form the signal peptide. Disulfide bonds link C5/C24, C17/C45, C30/C34, C49/C60, and C61/C66.

This sequence belongs to the three-finger toxin family. Long-chain subfamily. Type II alpha-neurotoxin sub-subfamily. Monomer in solution, homodimer in crystal state. In terms of tissue distribution, expressed by the venom gland.

The protein localises to the secreted. Its function is as follows. Binds to muscular and neuronal nicotinic acetylcholine receptor (nAChR) and inhibits acetylcholine from binding to the receptor, thereby impairing neuromuscular and neuronal transmission. Reversibly blocks chick and mouse muscle nicotinic acetylcholine receptors. Blocks muscle type nAChR with an IC(50)=30 nM, when heterologously expressed in oocytes. Also binds with high affinity to alpha-7/CHRNA7 nAChRs. In addition, shows a weak inhibition of neuronal alpha-3-beta-2/CHRNA3-CHRNB2 nAChR (IC(50)=2.9 uM). Selectively binds to alpha-1-delta subunit interface of the mouse muscle nicotinic acetylcholine receptor, with a 10-fold higher affinity for the adult than for the fetal receptors. In vivo, when intraperitoneally injected into mice, causes flaccid paralysis and respiratory distress, followed by death within 2-4 hours. This Bungarus candidus (Malayan krait) protein is Alpha-elapitoxin-Bc2a.